Here is a 430-residue protein sequence, read N- to C-terminus: UDP-N-acetylglucosamine 1-carboxyvinyltransferase 1 (430 aa).

22 to 23 contacts phosphoenolpyruvate; sequence KN. UDP-N-acetyl-alpha-D-glucosamine is bound at residue R93. Residue C117 is the Proton donor of the active site. At C117 the chain carries 2-(S-cysteinyl)pyruvic acid O-phosphothioketal. Residues 122-126, D305, and V327 contribute to the UDP-N-acetyl-alpha-D-glucosamine site; that span reads RPVDL.

It belongs to the EPSP synthase family. MurA subfamily.

The protein resides in the cytoplasm. The enzyme catalyses phosphoenolpyruvate + UDP-N-acetyl-alpha-D-glucosamine = UDP-N-acetyl-3-O-(1-carboxyvinyl)-alpha-D-glucosamine + phosphate. It functions in the pathway cell wall biogenesis; peptidoglycan biosynthesis. In terms of biological role, cell wall formation. Adds enolpyruvyl to UDP-N-acetylglucosamine. The polypeptide is UDP-N-acetylglucosamine 1-carboxyvinyltransferase 1 (Listeria monocytogenes serovar 1/2a (strain ATCC BAA-679 / EGD-e)).